Here is a 406-residue protein sequence, read N- to C-terminus: Imidazolonepropionase (406 aa).

Residues histidine 65 and histidine 67 each contribute to the Fe(3+) site. Residues histidine 65 and histidine 67 each contribute to the Zn(2+) site. Arginine 74, tyrosine 137, and histidine 170 together coordinate 4-imidazolone-5-propanoate. Tyrosine 137 contacts N-formimidoyl-L-glutamate. A Fe(3+)-binding site is contributed by histidine 235. Histidine 235 is a Zn(2+) binding site. Glutamine 238 lines the 4-imidazolone-5-propanoate pocket. A Fe(3+)-binding site is contributed by aspartate 310. Aspartate 310 serves as a coordination point for Zn(2+). N-formimidoyl-L-glutamate is bound by residues asparagine 312 and glycine 314. A 4-imidazolone-5-propanoate-binding site is contributed by threonine 315.

Belongs to the metallo-dependent hydrolases superfamily. HutI family. Zn(2+) is required as a cofactor. Fe(3+) serves as cofactor.

It localises to the cytoplasm. The catalysed reaction is 4-imidazolone-5-propanoate + H2O = N-formimidoyl-L-glutamate. The protein operates within amino-acid degradation; L-histidine degradation into L-glutamate; N-formimidoyl-L-glutamate from L-histidine: step 3/3. In terms of biological role, catalyzes the hydrolytic cleavage of the carbon-nitrogen bond in imidazolone-5-propanoate to yield N-formimidoyl-L-glutamate. It is the third step in the universal histidine degradation pathway. This is Imidazolonepropionase from Vibrio vulnificus (strain YJ016).